The sequence spans 50 residues: Small, acid-soluble spore protein K (50 aa).

The disordered stretch occupies residues 1 to 50 (MVRNKAKGFPNQNNNKFEGEPRAKDDYASKRADGSINSHPQERMRASGRR). Basic and acidic residues-rich tracts occupy residues 17 to 33 (FEGE…KRAD) and 40 to 50 (PQERMRASGRR).

The protein belongs to the SspK family.

The protein localises to the spore core. This Bacillus velezensis (strain DSM 23117 / BGSC 10A6 / LMG 26770 / FZB42) (Bacillus amyloliquefaciens subsp. plantarum) protein is Small, acid-soluble spore protein K.